The sequence spans 280 residues: Protein FLOURY 1-like (280 aa).

A helical transmembrane segment spans residues Gly-22–Leu-42. The segment at Val-153 to Leu-187 is disordered. Over residues Glu-169–Leu-187 the composition is skewed to acidic residues. A GTD-binding domain is found at Leu-188 to Met-280.

Its subcellular location is the membrane. The sequence is that of Protein FLOURY 1-like from Arabidopsis thaliana (Mouse-ear cress).